Reading from the N-terminus, the 350-residue chain is 26S proteasome non-ATPase regulatory subunit 8 (350 aa).

A disordered region spans residues 1–24 (MFIKGRAPRAPPRERRRATRGGLR). The residue at position 106 (Ser106) is a Phosphoserine. Residues 162–331 (PSFERYMAQL…QQKPEDTTIP (170 aa)) enclose the PCI domain. A Glycyl lysine isopeptide (Lys-Gly) (interchain with G-Cter in SUMO2) cross-link involves residue Lys297.

The protein belongs to the proteasome subunit S14 family. As to quaternary structure, component of the 19S proteasome regulatory particle complex. The 26S proteasome consists of a 20S core particle (CP) and two 19S regulatory subunits (RP). The regulatory particle is made of a lid composed of 9 subunits including PSMD8, a base containing 6 ATPases and few additional components. Interacts with DDI2. Interacts with TASOR.

Its function is as follows. Component of the 26S proteasome, a multiprotein complex involved in the ATP-dependent degradation of ubiquitinated proteins. This complex plays a key role in the maintenance of protein homeostasis by removing misfolded or damaged proteins, which could impair cellular functions, and by removing proteins whose functions are no longer required. Therefore, the proteasome participates in numerous cellular processes, including cell cycle progression, apoptosis, or DNA damage repair. The polypeptide is 26S proteasome non-ATPase regulatory subunit 8 (PSMD8) (Homo sapiens (Human)).